We begin with the raw amino-acid sequence, 94 residues long: Large ribosomal subunit protein uL23 (94 aa).

The protein belongs to the universal ribosomal protein uL23 family. As to quaternary structure, part of the 50S ribosomal subunit. Contacts protein L29, and trigger factor when it is bound to the ribosome.

In terms of biological role, one of the early assembly proteins it binds 23S rRNA. One of the proteins that surrounds the polypeptide exit tunnel on the outside of the ribosome. Forms the main docking site for trigger factor binding to the ribosome. In Roseiflexus sp. (strain RS-1), this protein is Large ribosomal subunit protein uL23.